The primary structure comprises 505 residues: Zinc metalloproteinase/disintegrin (505 aa).

An N-terminal signal peptide occupies residues 1-20 (MIQVLLVIICLAAFPYQGTS). Residues 21 to 214 (IILESGNVND…PIKKASQSNL (194 aa)) constitute a propeptide that is removed on maturation. 2 consecutive repeat copies span residues 153-179 (KYEDVEKEDEAPKMCGVTQNWESYEPI) and 180-206 (KYEDVEKEDEAPKMCGVTQNWESYEPI). Residues 220–416 (RYIELVIVAD…QKPQCILNKP (197 aa)) enclose the Peptidase M12B domain. Positions 223 and 307 each coordinate Ca(2+). His356 lines the Zn(2+) pocket. The active site involves Glu357. His360 and His366 together coordinate Zn(2+). 2 disulfide bridges follow: Cys371–Cys395 and Cys373–Cys378. The Ca(2+) site is built by Cys411 and Asn414. Positions 417–432 (LRTDTVSTPVSGNELL) are excised as a propeptide. One can recognise a Disintegrin domain in the interval 424–505 (TPVSGNELLE…AGCPRNPFHA (82 aa)). 6 disulfides stabilise this stretch: Cys438-Cys453, Cys440-Cys448, Cys447-Cys470, Cys461-Cys467, Cys466-Cys491, and Cys479-Cys498. Positions 483-485 (RGD) match the Cell attachment site motif.

Belongs to the venom metalloproteinase (M12B) family. P-II subfamily. P-IIa sub-subfamily. As to quaternary structure, monomer. It depends on Zn(2+) as a cofactor. As to expression, expressed by the venom gland.

Its subcellular location is the secreted. Its function is as follows. Impairs hemostasis in the envenomed animal. In terms of biological role, inhibits platelet aggregation induced by ADP, thrombin, platelet-activating factor and collagen. Acts by inhibiting fibrinogen interaction with platelet receptors GPIIb/GPIIIa (ITGA2B/ITGB3). The polypeptide is Zinc metalloproteinase/disintegrin (Gloydius brevicauda (Korean slamosa snake)).